Consider the following 563-residue polypeptide: Autophagy-related protein 18 (563 aa).

WD repeat units follow at residues 36–74 (KTDD…GKCY), 247–287 (AHKS…KLFQ), and 292–331 (TYST…ALEN). The L/FRRG motif signature appears at 288–292 (FRRGT). The disordered stretch occupies residues 329-430 (LENKHKKKKA…SSQAAKNEPL (102 aa)). Residues 366-393 (TQDDDEFADDGDDSDEAVEGDDNDDESL) show a composition bias toward acidic residues. Positions 404-417 (SQGSSNSFASFNSG) are enriched in low complexity.

This sequence belongs to the WD repeat PROPPIN family. In terms of assembly, component of the PI(3,5)P2 regulatory complex.

The protein localises to the preautophagosomal structure membrane. It localises to the vacuole membrane. The protein resides in the endosome membrane. The PI(3,5)P2 regulatory complex regulates both the synthesis and turnover of phosphatidylinositol 3,5-bisphosphate (PtdIns(3,5)P2). Necessary for proper vacuole morphology. Plays an important role in osmotically-induced vacuole fragmentation. Required for cytoplasm to vacuole transport (Cvt) vesicle formation, pexophagy and starvation-induced autophagy. Involved in correct ATG9 trafficking to the pre-autophagosomal structure. Might also be involved in premeiotic DNA replication. The sequence is that of Autophagy-related protein 18 (ATG18) from Scheffersomyces stipitis (strain ATCC 58785 / CBS 6054 / NBRC 10063 / NRRL Y-11545) (Yeast).